The chain runs to 663 residues: 4-hydroxy-3-methylbut-2-en-1-yl diphosphate synthase (flavodoxin) (663 aa).

The [4Fe-4S] cluster site is built by cysteine 568, cysteine 571, cysteine 602, and glutamate 609.

Belongs to the IspG family. [4Fe-4S] cluster serves as cofactor.

The enzyme catalyses (2E)-4-hydroxy-3-methylbut-2-enyl diphosphate + oxidized [flavodoxin] + H2O + 2 H(+) = 2-C-methyl-D-erythritol 2,4-cyclic diphosphate + reduced [flavodoxin]. It functions in the pathway isoprenoid biosynthesis; isopentenyl diphosphate biosynthesis via DXP pathway; isopentenyl diphosphate from 1-deoxy-D-xylulose 5-phosphate: step 5/6. In terms of biological role, converts 2C-methyl-D-erythritol 2,4-cyclodiphosphate (ME-2,4cPP) into 1-hydroxy-2-methyl-2-(E)-butenyl 4-diphosphate. The polypeptide is 4-hydroxy-3-methylbut-2-en-1-yl diphosphate synthase (flavodoxin) (Leptospira interrogans serogroup Icterohaemorrhagiae serovar copenhageni (strain Fiocruz L1-130)).